We begin with the raw amino-acid sequence, 82 residues long: UPF0512 protein P (82 aa).

Belongs to the UPF0512 family.

In Dictyostelium discoideum (Social amoeba), this protein is UPF0512 protein P.